The chain runs to 84 residues: Small ribosomal subunit protein eS27-like (84 aa).

The span at 1-16 (MPLARDLLHPSLDEEK) shows a compositional bias: basic and acidic residues. Positions 1 to 23 (MPLARDLLHPSLDEEKKKHKKKR) are disordered. The segment at 38–60 (PGCYKITTVFSHAQTVVLCVGCS) adopts a C4-type zinc-finger fold.

This sequence belongs to the eukaryotic ribosomal protein eS27 family. Zn(2+) serves as cofactor.

In Bos taurus (Bovine), this protein is Small ribosomal subunit protein eS27-like (RPS27L).